The chain runs to 146 residues: Ribonuclease H (146 aa).

One can recognise an RNase H type-1 domain in the interval 1 to 143; that stretch reads MRKKIIIYTD…CDYLARQAIK (143 aa). Mg(2+) contacts are provided by Asp10, Glu48, Asp70, and Asp135.

Belongs to the RNase H family. In terms of assembly, monomer. Requires Mg(2+) as cofactor.

The protein localises to the cytoplasm. It catalyses the reaction Endonucleolytic cleavage to 5'-phosphomonoester.. Endonuclease that specifically degrades the RNA of RNA-DNA hybrids. This Prosthecochloris aestuarii (strain DSM 271 / SK 413) protein is Ribonuclease H.